The following is a 126-amino-acid chain: Holo-[acyl-carrier-protein] synthase (126 aa).

Mg(2+)-binding residues include aspartate 8 and glutamate 59.

It belongs to the P-Pant transferase superfamily. AcpS family. It depends on Mg(2+) as a cofactor.

It is found in the cytoplasm. It catalyses the reaction apo-[ACP] + CoA = holo-[ACP] + adenosine 3',5'-bisphosphate + H(+). Its function is as follows. Transfers the 4'-phosphopantetheine moiety from coenzyme A to a Ser of acyl-carrier-protein. This is Holo-[acyl-carrier-protein] synthase from Rickettsia prowazekii (strain Madrid E).